Consider the following 783-residue polypeptide: Probable phosphoketolase (783 aa).

Belongs to the XFP family. It depends on thiamine diphosphate as a cofactor.

This is Probable phosphoketolase from Rhodopseudomonas palustris (strain ATCC BAA-98 / CGA009).